The sequence spans 489 residues: MSNKAEKYSQLRSMIPEMRRVKHIYFVGIGGAGMGGIAEVLVNEGYKLSGSDIAESAVTQRLAQLGATIYIGHDASQVKGMDVVVVSTAISADNPELVAAKELRIPVVRRAEMLAELMRYRHGVAVAGTHGKTTTTSLIASIYGEAERDPTFVIGGLLNSAGTNARLGHSRYLIAEADESDASFLHLQPMVSVVTNIEADHMDTYEGDLEKLKTTFVDFLHNLPFYGVAVVCIDDPIVRELIPRIGRRIVTYGFSDDADVQALDFKQTGYSCEFTVKRAGLADLRLSVNLPGEHNVLNALAAIAVATEDDIEDAAIIKALAEFQGIGRRFQQIGEFATSKGEIKLVDDYGHHPSEVAATIKAARLGWPERRLVMIYQPHRYSRTRDLYEDFVEVLSQVDCLLMLDVYAAGEAPIPGADSRALCRSIRVRGQVEPVFVASTEQLETILPEILQGGDLLLTQGAGSIGLLSRSLTESNLGFAATGKDEKNA.

Residue 128 to 134 (GTHGKTT) participates in ATP binding.

It belongs to the MurCDEF family.

It localises to the cytoplasm. It carries out the reaction UDP-N-acetyl-alpha-D-muramate + L-alanine + ATP = UDP-N-acetyl-alpha-D-muramoyl-L-alanine + ADP + phosphate + H(+). Its pathway is cell wall biogenesis; peptidoglycan biosynthesis. Its function is as follows. Cell wall formation. The chain is UDP-N-acetylmuramate--L-alanine ligase from Shewanella halifaxensis (strain HAW-EB4).